We begin with the raw amino-acid sequence, 344 residues long: Fructose-1,6-bisphosphatase class 1 (344 aa).

Mg(2+)-binding residues include E90, D109, L111, and D112. Substrate contacts are provided by residues 112–115 and N200; that span reads DGSS. E271 lines the Mg(2+) pocket.

Belongs to the FBPase class 1 family. As to quaternary structure, homotetramer. The cofactor is Mg(2+).

It is found in the cytoplasm. The enzyme catalyses beta-D-fructose 1,6-bisphosphate + H2O = beta-D-fructose 6-phosphate + phosphate. The protein operates within carbohydrate biosynthesis; gluconeogenesis. The sequence is that of Fructose-1,6-bisphosphatase class 1 from Nitrobacter vulgaris.